The primary structure comprises 267 residues: Myxobacterial hemagglutinin (267 aa).

Repeat copies occupy residues 1 to 66, 67 to 133, 134 to 200, and 201 to 267. The interval 1 to 267 is 4 X 65 AA tandem repeats; the sequence is MAAYLVQNQW…GPIGFRARLG (267 aa).

Belongs to the bacterial lectin family.

In terms of biological role, this lectin might have a role in the differentiation of cells. This is Myxobacterial hemagglutinin (mbhA) from Myxococcus xanthus.